The sequence spans 141 residues: Large ribosomal subunit protein uL11 (141 aa).

The protein belongs to the universal ribosomal protein uL11 family. Part of the ribosomal stalk of the 50S ribosomal subunit. Interacts with L10 and the large rRNA to form the base of the stalk. L10 forms an elongated spine to which L12 dimers bind in a sequential fashion forming a multimeric L10(L12)X complex. In terms of processing, one or more lysine residues are methylated.

Its function is as follows. Forms part of the ribosomal stalk which helps the ribosome interact with GTP-bound translation factors. This Clostridium kluyveri (strain ATCC 8527 / DSM 555 / NBRC 12016 / NCIMB 10680 / K1) protein is Large ribosomal subunit protein uL11.